Reading from the N-terminus, the 911-residue chain is MRVCSEASPRRRQVTMLVSLLLFSAQAGFCARSAAGHSGILSLGDPAASGSALGAAEDVGDITFAEAVNSAAFDTSAIFENKLYACSTPNGASVVRLAQPRKCHKYTDSTNMTEGIAVTFKQNIAPLIFNATLYYKHITTVTTWKGFGLAQITNEYRTRVNIGFGEIKEDIDGKGECVTRAAYNRNKVVYEAYDNDVYGVYKPLVPTLLRSPSTRSFHTTNVTQRRTALGYRTSTTVDCVVEYMQARSVYPYTYFGLATGNTLEISPFYKSSDKHSRYNLYAEDRVYEALGYQARDLETRVLAPPHNRNFVFEDEFTVAWDQMDETTTACTMAKWLEIPEAVRVSYNKSFHFNFKDLTATLVASKTPFNISRLHLGGCVPRIANETIEAIYGKKYKNTHVRSGGIEYYLANGGFLIAFQRLVSNDLAELYLDEAARQNHSAVSRSKRAAPSGGGSILSGPAGDLINTHTSATFAMLQFTYDKIQKHVNMLIGNLLEAWCEMQNRQLVVWHEIKKLNPASLMTSMYGHAVAARLLGDVLAVSKCLEIPIENVVMQDSMRVPGDPSMCYVRPVLVFKYPAAADSEAMRGRVARPANNSDVGGSQQAGEAEAQQHVGVHGQLGEHNEILHGRTLIEPCKASHRRYFLFGANYLLYEDYKFIRQVNASEIEEISSTFVNLDVTLLEDLDFVPLAVYTREELRDVGTLNYDEVVRYNNLYNKMFRDLDTALKFDDGLATLRAIGEFLTNTLGGAGKVLGNVVMGAAAAIISTVSGISSFLANPFAALGIGIAVIVCVIMGLLAFRYVMTLRANPVQTLFPGIIDVGEKARQHATVRKDEDASDKELAERVLRGLEILSFESEVRKRREKAAASAKSTLAKRIGQFLRHRKTSTKDDTRKLLKTFDDEDYYYDDEHL.

The signal sequence occupies residues 1–30 (MRVCSEASPRRRQVTMLVSLLLFSAQAGFC). Over 31 to 778 (ARSAAGHSGI…SGISSFLANP (748 aa)) the chain is Virion surface. Cystine bridges form between C86–C543, C103–C499, C177–C239, C330–C378, and C566–C635. Residues N111 and N130 are each glycosylated (N-linked (GlcNAc...) asparagine; by host). Residues 143-149 (TWKGFGL) form an involved in fusion and/or binding to host membrane region. N221 is a glycosylation site (N-linked (GlcNAc...) asparagine; by host). An involved in fusion and/or binding to host membrane region spans residues 228-233 (ALGYRT). N347, N369, N384, N438, and N594 each carry an N-linked (GlcNAc...) asparagine; by host glycan. The tract at residues 591–610 (RPANNSDVGGSQQAGEAEAQ) is disordered. A compositionally biased stretch (low complexity) spans 599 to 610 (GGSQQAGEAEAQ). N-linked (GlcNAc...) asparagine; by host glycosylation is present at N662. Positions 722–776 (LDTALKFDDGLATLRAIGEFLTNTLGGAGKVLGNVVMGAAAAIISTVSGISSFLA) are hydrophobic membrane proximal region. A helical membrane pass occupies residues 779-799 (FAALGIGIAVIVCVIMGLLAF). At 800-911 (RYVMTLRANP…EDYYYDDEHL (112 aa)) the chain is on the intravirion side.

Belongs to the herpesviridae glycoprotein B family. As to quaternary structure, homotrimer; disulfide-linked. Binds to heparan sulfate proteoglycans. Interacts with gH/gL heterodimer.

The protein resides in the virion membrane. It is found in the host cell membrane. The protein localises to the host endosome membrane. Its subcellular location is the host Golgi apparatus membrane. Its function is as follows. Envelope glycoprotein that forms spikes at the surface of virion envelope. Essential for the initial attachment to heparan sulfate moieties of the host cell surface proteoglycans. Involved in fusion of viral and cellular membranes leading to virus entry into the host cell. Following initial binding to its host receptors, membrane fusion is mediated by the fusion machinery composed at least of gB and the heterodimer gH/gL. May be involved in the fusion between the virion envelope and the outer nuclear membrane during virion egress. The polypeptide is Envelope glycoprotein B (Amazona oratrix (yellow-headed parrot)).